The primary structure comprises 345 residues: MADRIYWTLEQAQDLFNKPFLELMFEAQQIHRQHFDPRQVQVSTLLSIKTGSCPEDCKYCPQSSRYRTGIDTERLMQVEQVLDSARQAKAAGSTRFCMGAAWKNPHERDMPYLEQMVQGVKAMGMETCMTLGMLHHDQAERLASAGLDFYNHNLDTSPEFYGSIITTRTYQERLDTLDKVRGAGIKVCSGGIVGLGETVRDRAGLLVQLANLPTPPESVPINMLVKVKGTPLADNEDVDPFDFIRTIAVARIMMPASYVRLSAGREQMSEQTQAMCFMAGANSIFYGCKLLTTPNPKEDKDLALFLKLGLNPQQTGTEFGDNQQQQRLAEQLINADSEQFYNAAV.

The Radical SAM core domain maps to 38 to 256; it reads RQVQVSTLLS…IAVARIMMPA (219 aa). The [4Fe-4S] cluster site is built by cysteine 53, cysteine 57, and cysteine 60. Cysteine 97, cysteine 128, cysteine 188, and arginine 260 together coordinate [2Fe-2S] cluster.

This sequence belongs to the radical SAM superfamily. Biotin synthase family. In terms of assembly, homodimer. It depends on [4Fe-4S] cluster as a cofactor. [2Fe-2S] cluster is required as a cofactor.

It catalyses the reaction (4R,5S)-dethiobiotin + (sulfur carrier)-SH + 2 reduced [2Fe-2S]-[ferredoxin] + 2 S-adenosyl-L-methionine = (sulfur carrier)-H + biotin + 2 5'-deoxyadenosine + 2 L-methionine + 2 oxidized [2Fe-2S]-[ferredoxin]. Its pathway is cofactor biosynthesis; biotin biosynthesis; biotin from 7,8-diaminononanoate: step 2/2. Catalyzes the conversion of dethiobiotin (DTB) to biotin by the insertion of a sulfur atom into dethiobiotin via a radical-based mechanism. The chain is Biotin synthase from Pectobacterium atrosepticum (strain SCRI 1043 / ATCC BAA-672) (Erwinia carotovora subsp. atroseptica).